The sequence spans 294 residues: N-acetylmuramic acid 6-phosphate etherase (294 aa).

In terms of domain architecture, SIS spans 54–217 (TIHSFKSNGR…STASMIGVGK (164 aa)). Catalysis depends on Glu-82, which acts as the Proton donor. Residue Glu-113 is part of the active site.

Belongs to the GCKR-like family. MurNAc-6-P etherase subfamily. Homodimer.

It catalyses the reaction N-acetyl-D-muramate 6-phosphate + H2O = N-acetyl-D-glucosamine 6-phosphate + (R)-lactate. It functions in the pathway amino-sugar metabolism; N-acetylmuramate degradation. Specifically catalyzes the cleavage of the D-lactyl ether substituent of MurNAc 6-phosphate, producing GlcNAc 6-phosphate and D-lactate. This is N-acetylmuramic acid 6-phosphate etherase from Oceanobacillus iheyensis (strain DSM 14371 / CIP 107618 / JCM 11309 / KCTC 3954 / HTE831).